The sequence spans 417 residues: Putative competence-damage inducible protein (417 aa).

It belongs to the CinA family.

The polypeptide is Putative competence-damage inducible protein (Oceanobacillus iheyensis (strain DSM 14371 / CIP 107618 / JCM 11309 / KCTC 3954 / HTE831)).